The sequence spans 354 residues: Uroporphyrinogen decarboxylase (354 aa).

Substrate contacts are provided by residues 30–34, D79, Y154, S209, and H333; that span reads RQAGR.

It belongs to the uroporphyrinogen decarboxylase family. In terms of assembly, homodimer.

Its subcellular location is the cytoplasm. The enzyme catalyses uroporphyrinogen III + 4 H(+) = coproporphyrinogen III + 4 CO2. It participates in porphyrin-containing compound metabolism; protoporphyrin-IX biosynthesis; coproporphyrinogen-III from 5-aminolevulinate: step 4/4. In terms of biological role, catalyzes the decarboxylation of four acetate groups of uroporphyrinogen-III to yield coproporphyrinogen-III. The polypeptide is Uroporphyrinogen decarboxylase (Mycobacterium sp. (strain JLS)).